A 295-amino-acid polypeptide reads, in one-letter code: (R)-3-hydroxydecanoyl-ACP:CoA transacylase (295 aa).

The AB hydrolase-1 domain maps to 28–254 (NTIILINGSL…VIRDAGHFLD (227 aa)).

Its pathway is polyester biosynthesis; polyhydroxyalkanoate biosynthesis. Functionally, catalyzes the transfer of the acyl moiety from in vitro synthesized 3-hydroxydecanoyl-CoA to acyl carrier protein. The polypeptide is (R)-3-hydroxydecanoyl-ACP:CoA transacylase (phaG) (Pseudomonas putida (strain ATCC 47054 / DSM 6125 / CFBP 8728 / NCIMB 11950 / KT2440)).